The following is a 470-amino-acid chain: Uronate isomerase (470 aa).

It belongs to the metallo-dependent hydrolases superfamily. Uronate isomerase family.

It catalyses the reaction D-glucuronate = D-fructuronate. The enzyme catalyses aldehydo-D-galacturonate = keto-D-tagaturonate. The protein operates within carbohydrate metabolism; pentose and glucuronate interconversion. This is Uronate isomerase from Salmonella newport (strain SL254).